The following is a 178-amino-acid chain: CDP-archaeol synthase (178 aa).

A run of 5 helical transmembrane segments spans residues leucine 3–valine 23, phenylalanine 56–tyrosine 76, isoleucine 91–isoleucine 111, alanine 123–tyrosine 143, and leucine 149–tyrosine 169.

Belongs to the CDP-archaeol synthase family. It depends on Mg(2+) as a cofactor.

Its subcellular location is the cell membrane. The catalysed reaction is 2,3-bis-O-(geranylgeranyl)-sn-glycerol 1-phosphate + CTP + H(+) = CDP-2,3-bis-O-(geranylgeranyl)-sn-glycerol + diphosphate. It functions in the pathway membrane lipid metabolism; glycerophospholipid metabolism. Functionally, catalyzes the formation of CDP-2,3-bis-(O-geranylgeranyl)-sn-glycerol (CDP-archaeol) from 2,3-bis-(O-geranylgeranyl)-sn-glycerol 1-phosphate (DGGGP) and CTP. This reaction is the third ether-bond-formation step in the biosynthesis of archaeal membrane lipids. The chain is CDP-archaeol synthase from Methanococcus maripaludis (strain C7 / ATCC BAA-1331).